A 100-amino-acid polypeptide reads, in one-letter code: Large ribosomal subunit protein uL23 (100 aa).

Belongs to the universal ribosomal protein uL23 family. Part of the 50S ribosomal subunit. Contacts protein L29, and trigger factor when it is bound to the ribosome.

Its function is as follows. One of the early assembly proteins it binds 23S rRNA. One of the proteins that surrounds the polypeptide exit tunnel on the outside of the ribosome. Forms the main docking site for trigger factor binding to the ribosome. This chain is Large ribosomal subunit protein uL23, found in Edwardsiella ictaluri (strain 93-146).